Consider the following 249-residue polypeptide: Phosphate import ATP-binding protein PstB 2 (249 aa).

In terms of domain architecture, ABC transporter spans 4-244 (FEVTHLNLFY…PKDHRTQGYV (241 aa)). Residue 36–43 (GPSGCGKS) participates in ATP binding.

It belongs to the ABC transporter superfamily. Phosphate importer (TC 3.A.1.7) family. As to quaternary structure, the complex is composed of two ATP-binding proteins (PstB), two transmembrane proteins (PstC and PstA) and a solute-binding protein (PstS).

The protein localises to the cell inner membrane. The enzyme catalyses phosphate(out) + ATP + H2O = ADP + 2 phosphate(in) + H(+). In terms of biological role, part of the ABC transporter complex PstSACB involved in phosphate import. Responsible for energy coupling to the transport system. This Shewanella oneidensis (strain ATCC 700550 / JCM 31522 / CIP 106686 / LMG 19005 / NCIMB 14063 / MR-1) protein is Phosphate import ATP-binding protein PstB 2.